A 142-amino-acid chain; its full sequence is Transcriptional regulator MraZ (142 aa).

SpoVT-AbrB domains lie at Ala-5 to Glu-51 and Ala-77 to Thr-120.

Belongs to the MraZ family. In terms of assembly, forms oligomers.

The protein localises to the cytoplasm. Its subcellular location is the nucleoid. The chain is Transcriptional regulator MraZ from Burkholderia cenocepacia (strain HI2424).